The sequence spans 675 residues: Potassium-transporting ATPase ATP-binding subunit 2 (675 aa).

Transmembrane regions (helical) follow at residues 34-54 (IMFV…FPDI), 65-85 (LITI…SEAF), 216-236 (IALF…IVTL), and 245-265 (LILP…TTIG). Asp304 functions as the 4-aspartylphosphate intermediate in the catalytic mechanism. Residues Asp341, Glu345, 372-379 (FTAETRMS), and Lys390 each bind ATP. 2 residues coordinate Mg(2+): Asp513 and Asp517. 3 helical membrane passes run 569 to 591 (ALTT…ALMM), 611 to 631 (AIIS…PIAM), and 644 to 664 (IFIN…FLGI).

The protein belongs to the cation transport ATPase (P-type) (TC 3.A.3) family. Type IA subfamily. The system is composed of three essential subunits: KdpA, KdpB and KdpC.

The protein localises to the cell membrane. It catalyses the reaction K(+)(out) + ATP + H2O = K(+)(in) + ADP + phosphate + H(+). Its function is as follows. Part of the high-affinity ATP-driven potassium transport (or Kdp) system, which catalyzes the hydrolysis of ATP coupled with the electrogenic transport of potassium into the cytoplasm. This subunit is responsible for energy coupling to the transport system and for the release of the potassium ions to the cytoplasm. In Staphylococcus aureus (strain Mu50 / ATCC 700699), this protein is Potassium-transporting ATPase ATP-binding subunit 2.